The chain runs to 155 residues: Transmembrane protein C1orf162 (155 aa).

Residues 1–28 are disordered; the sequence is MGGNGSTCKPDTERQGTLSTAAPTTSPA. Positions 19–28 are enriched in low complexity; that stretch reads STAAPTTSPA. Residues 41-61 traverse the membrane as a helical segment; that stretch reads ILAFCAGVLLTLLLIAFIFLI. Residues 92–114 form a disordered region; it reads ADHSKPQAPDPHSDPPAKLSSIP. Ser-140 carries the phosphoserine modification.

The protein resides in the membrane. The chain is Transmembrane protein C1orf162 (C1orf162) from Homo sapiens (Human).